Here is a 361-residue protein sequence, read N- to C-terminus: Cobalt-precorrin-5B C(1)-methyltransferase (361 aa).

It belongs to the CbiD family.

It catalyses the reaction Co-precorrin-5B + S-adenosyl-L-methionine = Co-precorrin-6A + S-adenosyl-L-homocysteine. The protein operates within cofactor biosynthesis; adenosylcobalamin biosynthesis; cob(II)yrinate a,c-diamide from sirohydrochlorin (anaerobic route): step 6/10. Catalyzes the methylation of C-1 in cobalt-precorrin-5B to form cobalt-precorrin-6A. In Methylorubrum extorquens (strain CM4 / NCIMB 13688) (Methylobacterium extorquens), this protein is Cobalt-precorrin-5B C(1)-methyltransferase.